Consider the following 244-residue polypeptide: Leucyl/phenylalanyl-tRNA--protein transferase (244 aa).

The protein belongs to the L/F-transferase family.

It localises to the cytoplasm. The enzyme catalyses N-terminal L-lysyl-[protein] + L-leucyl-tRNA(Leu) = N-terminal L-leucyl-L-lysyl-[protein] + tRNA(Leu) + H(+). It catalyses the reaction N-terminal L-arginyl-[protein] + L-leucyl-tRNA(Leu) = N-terminal L-leucyl-L-arginyl-[protein] + tRNA(Leu) + H(+). The catalysed reaction is L-phenylalanyl-tRNA(Phe) + an N-terminal L-alpha-aminoacyl-[protein] = an N-terminal L-phenylalanyl-L-alpha-aminoacyl-[protein] + tRNA(Phe). Its function is as follows. Functions in the N-end rule pathway of protein degradation where it conjugates Leu, Phe and, less efficiently, Met from aminoacyl-tRNAs to the N-termini of proteins containing an N-terminal arginine or lysine. This is Leucyl/phenylalanyl-tRNA--protein transferase from Thermodesulfovibrio yellowstonii (strain ATCC 51303 / DSM 11347 / YP87).